We begin with the raw amino-acid sequence, 308 residues long: Methionyl-tRNA formyltransferase (308 aa).

S110–P113 provides a ligand contact to (6S)-5,6,7,8-tetrahydrofolate.

The protein belongs to the Fmt family.

It carries out the reaction L-methionyl-tRNA(fMet) + (6R)-10-formyltetrahydrofolate = N-formyl-L-methionyl-tRNA(fMet) + (6S)-5,6,7,8-tetrahydrofolate + H(+). In terms of biological role, attaches a formyl group to the free amino group of methionyl-tRNA(fMet). The formyl group appears to play a dual role in the initiator identity of N-formylmethionyl-tRNA by promoting its recognition by IF2 and preventing the misappropriation of this tRNA by the elongation apparatus. In Neisseria gonorrhoeae (strain NCCP11945), this protein is Methionyl-tRNA formyltransferase.